Reading from the N-terminus, the 326-residue chain is Glyoxylate/hydroxypyruvate reductase B (326 aa).

Catalysis depends on residues Arg-237 and Glu-266. His-285 serves as the catalytic Proton donor.

The protein belongs to the D-isomer specific 2-hydroxyacid dehydrogenase family. GhrB subfamily. In terms of assembly, homodimer.

Its subcellular location is the cytoplasm. It catalyses the reaction glycolate + NADP(+) = glyoxylate + NADPH + H(+). The enzyme catalyses (R)-glycerate + NAD(+) = 3-hydroxypyruvate + NADH + H(+). The catalysed reaction is (R)-glycerate + NADP(+) = 3-hydroxypyruvate + NADPH + H(+). Its function is as follows. Catalyzes the NADPH-dependent reduction of glyoxylate and hydroxypyruvate into glycolate and glycerate, respectively. This chain is Glyoxylate/hydroxypyruvate reductase B, found in Yersinia pestis bv. Antiqua (strain Nepal516).